A 241-amino-acid polypeptide reads, in one-letter code: Kynurenine formamidase (241 aa).

Positions 23-27 (HGGAW) match the HGGXW motif. S95 functions as the Nucleophile in the catalytic mechanism. Active-site residues include D191 and H223.

This sequence belongs to the kynurenine formamidase family. Homodimer.

It catalyses the reaction N-formyl-L-kynurenine + H2O = L-kynurenine + formate + H(+). Its pathway is amino-acid degradation; L-tryptophan degradation via kynurenine pathway; L-kynurenine from L-tryptophan: step 2/2. Catalyzes the hydrolysis of N-formyl-L-kynurenine to L-kynurenine, the second step in the kynurenine pathway of tryptophan degradation. Kynurenine may be further oxidized to nicotinic acid, NAD(H) and NADP(H). Required for elimination of toxic metabolites. The sequence is that of Kynurenine formamidase from Eremothecium gossypii (strain ATCC 10895 / CBS 109.51 / FGSC 9923 / NRRL Y-1056) (Yeast).